Here is a 485-residue protein sequence, read N- to C-terminus: Bifunctional protein GlmU (485 aa).

The segment at 1-241 is pyrophosphorylase; it reads MSASDFSSAV…ARELAGVNDR (241 aa). Residues 13–16, Lys27, Gln84, and 89–90 contribute to the UDP-N-acetyl-alpha-D-glucosamine site; these read LAAG and GT. Asp114 is a binding site for Mg(2+). Gly151, Glu166, Asn181, and Asn239 together coordinate UDP-N-acetyl-alpha-D-glucosamine. Asn239 is a Mg(2+) binding site. Positions 242–262 are linker; that stretch reads VQLAEAGAELNRRTVIAAMRG. The N-acetyltransferase stretch occupies residues 263-485; that stretch reads GATIVDPATT…AAQNVHNQEG (223 aa). UDP-N-acetyl-alpha-D-glucosamine-binding residues include Arg344 and Lys362. The active-site Proton acceptor is the His374. Tyr377 and Asn388 together coordinate UDP-N-acetyl-alpha-D-glucosamine. Residues Ala391, 397 to 398, Ser416, and Ala434 each bind acetyl-CoA; that span reads NY. The segment at 465–485 is disordered; that stretch reads RPGTAAAQAAEAAQNVHNQEG. Residues 469 to 478 are compositionally biased toward low complexity; the sequence is AAAQAAEAAQ.

In the N-terminal section; belongs to the N-acetylglucosamine-1-phosphate uridyltransferase family. This sequence in the C-terminal section; belongs to the transferase hexapeptide repeat family. As to quaternary structure, homotrimer. Requires Mg(2+) as cofactor.

The protein localises to the cytoplasm. The catalysed reaction is alpha-D-glucosamine 1-phosphate + acetyl-CoA = N-acetyl-alpha-D-glucosamine 1-phosphate + CoA + H(+). It catalyses the reaction N-acetyl-alpha-D-glucosamine 1-phosphate + UTP + H(+) = UDP-N-acetyl-alpha-D-glucosamine + diphosphate. The protein operates within nucleotide-sugar biosynthesis; UDP-N-acetyl-alpha-D-glucosamine biosynthesis; N-acetyl-alpha-D-glucosamine 1-phosphate from alpha-D-glucosamine 6-phosphate (route II): step 2/2. Its pathway is nucleotide-sugar biosynthesis; UDP-N-acetyl-alpha-D-glucosamine biosynthesis; UDP-N-acetyl-alpha-D-glucosamine from N-acetyl-alpha-D-glucosamine 1-phosphate: step 1/1. It functions in the pathway bacterial outer membrane biogenesis; LPS lipid A biosynthesis. Catalyzes the last two sequential reactions in the de novo biosynthetic pathway for UDP-N-acetylglucosamine (UDP-GlcNAc). The C-terminal domain catalyzes the transfer of acetyl group from acetyl coenzyme A to glucosamine-1-phosphate (GlcN-1-P) to produce N-acetylglucosamine-1-phosphate (GlcNAc-1-P), which is converted into UDP-GlcNAc by the transfer of uridine 5-monophosphate (from uridine 5-triphosphate), a reaction catalyzed by the N-terminal domain. The protein is Bifunctional protein GlmU of Corynebacterium glutamicum (strain R).